The primary structure comprises 513 residues: Alpha-1B-glycoprotein (513 aa).

The first 20 residues, 1–20 (MSLLTTVLLLWGFTLGPGNA), serve as a signal peptide directing secretion. Ig-like V-type domains lie at 22-126 (WLDS…VTGK), 127-219 (EPLP…MSAT), 220-312 (QLPP…PVEL), 313-415 (MWSD…LRIN), and 416-513 (GPAP…VEGS). 3 N-linked (GlcNAc...) asparagine glycosylation sites follow: Asn44, Asn89, and Asn192. Cystine bridges form between Cys49/Cys96, Cys153/Cys195, Cys245/Cys292, Cys343/Cys392, and Cys441/Cys488. Asn369, Asn381, Asn389, and Asn485 each carry an N-linked (GlcNAc...) asparagine glycan.

In terms of assembly, interacts with CRISP3. Isoform 1 is expressed in normal liver. Isoform 2 is expressed in the regenerating liver after partial hepatectomy and at very low levels in the normal lung, brain and testis.

The protein localises to the secreted. The polypeptide is Alpha-1B-glycoprotein (Rattus norvegicus (Rat)).